Consider the following 160-residue polypeptide: Phosphopantetheine adenylyltransferase (160 aa).

Residue Ser-10 participates in substrate binding. ATP-binding positions include 10 to 11 (SF) and His-18. Substrate contacts are provided by Lys-42, Leu-74, and Arg-88. Residues 89-91 (GLR), Glu-99, and 124-130 (YSFLSSS) each bind ATP.

It belongs to the bacterial CoaD family. Homohexamer. The cofactor is Mg(2+).

Its subcellular location is the cytoplasm. It catalyses the reaction (R)-4'-phosphopantetheine + ATP + H(+) = 3'-dephospho-CoA + diphosphate. It participates in cofactor biosynthesis; coenzyme A biosynthesis; CoA from (R)-pantothenate: step 4/5. In terms of biological role, reversibly transfers an adenylyl group from ATP to 4'-phosphopantetheine, yielding dephospho-CoA (dPCoA) and pyrophosphate. In Bacillus pumilus (strain SAFR-032), this protein is Phosphopantetheine adenylyltransferase.